The primary structure comprises 48 residues: Protein TUNAR (48 aa).

The segment at 1–20 (MVITSENDEDRGGQEKESKE) is disordered. The span at 10 to 20 (DRGGQEKESKE) shows a compositional bias: basic and acidic residues. The helical transmembrane segment at 24–44 (LAMLGIIGTILNLIVIIFVYI) threads the bilayer.

In terms of assembly, interacts with ATPase ATP2A2/SERCA2. Interacts with ATPase ATP2A3/SERCA3; the interaction occurs at low levels in low glucose conditions and is increased by high glucose levels. In terms of tissue distribution, highly expressed in pancreatic islets where it is enriched in the insulin-producing beta cells.

The protein resides in the endoplasmic reticulum membrane. Its subcellular location is the extracellular vesicle membrane. Its function is as follows. In neurons, plays a role in the regulation of intracellular Ca(2+), possibly by acting as an activator of ATP2A2/SERCA2, thus increasing the efficiency with which Ca(2+) is removed from the cytoplasm. Inhibits differentiation of embryonic stem cells into neurons and inhibits neurite outgrowth, likely as a result of its role in intracellular Ca(2+) regulation. In pancreatic beta cells, lowers Ca(2+) levels in the endoplasmic reticulum and enhances glucose-stimulated insulin secretion. The sequence is that of Protein TUNAR from Homo sapiens (Human).